We begin with the raw amino-acid sequence, 251 residues long: 5'-nucleotidase SurE (251 aa).

A divalent metal cation is bound by residues aspartate 8, aspartate 9, serine 40, and asparagine 95.

It belongs to the SurE nucleotidase family. Requires a divalent metal cation as cofactor.

It localises to the cytoplasm. It catalyses the reaction a ribonucleoside 5'-phosphate + H2O = a ribonucleoside + phosphate. Functionally, nucleotidase that shows phosphatase activity on nucleoside 5'-monophosphates. This chain is 5'-nucleotidase SurE, found in Lawsonia intracellularis (strain PHE/MN1-00).